The primary structure comprises 177 residues: Large ribosomal subunit protein uL6 (177 aa).

It belongs to the universal ribosomal protein uL6 family. As to quaternary structure, part of the 50S ribosomal subunit.

Its function is as follows. This protein binds to the 23S rRNA, and is important in its secondary structure. It is located near the subunit interface in the base of the L7/L12 stalk, and near the tRNA binding site of the peptidyltransferase center. The chain is Large ribosomal subunit protein uL6 from Roseobacter denitrificans (strain ATCC 33942 / OCh 114) (Erythrobacter sp. (strain OCh 114)).